Reading from the N-terminus, the 406-residue chain is Protrudin (406 aa).

Over 1 to 71 (MQAAERDGVA…AAEGVRALLR (71 aa)) the chain is Cytoplasmic. Residues 1 to 97 (MQAAERDGVA…LLLTLDQAAW (97 aa)) are sufficient for homooligomerization. The tract at residues 1–210 (MQAAERDGVA…LYLLPLCWVM (210 aa)) is sufficient for localization to endoplasmic reticulum tubular network. A helical membrane pass occupies residues 72–92 (WQRPLCSLLVCLGLNFLLLTL). Aspartate 93 is a topological domain (lumenal). The chain crosses the membrane as a helical span at residues 94 to 114 (QAAWYSVLALLVLLPALLGYL). The Cytoplasmic portion of the chain corresponds to 115-192 (QETYRVRPSE…NPTVSSQFYG (78 aa)). Residues 193–213 (ALLGSVCILYLLPLCWVMAIL) constitute an intramembrane region (helical). The Cytoplasmic portion of the chain corresponds to 214–406 (NSTLFLGNSQ…CAQCNQMLIK (193 aa)). The interval 239–295 (LGTKPLESAPEPAKPLPTDAPPDRTPTPTSTEDLTPGSVEEAEEAEPDEEFKDAIEE) is disordered. A compositionally biased stretch (pro residues) spans 250 to 263 (PAKPLPTDAPPDRT). Over residues 278–295 (EEAEEAEPDEEFKDAIEE) the composition is skewed to acidic residues. An FYVE-type zinc finger spans residues 339 to 405 (SNNFGTCTGC…VCAQCNQMLI (67 aa)). Zn(2+) contacts are provided by cysteine 345, cysteine 348, cysteine 361, cysteine 364, cysteine 369, cysteine 372, cysteine 397, and cysteine 400.

As to quaternary structure, can form homooligomers (monomers, dimers and tetramers).

The protein localises to the recycling endosome membrane. The protein resides in the endoplasmic reticulum membrane. Its subcellular location is the cell projection. It localises to the growth cone membrane. Functionally, key regulator of RAB11-dependent vesicular trafficking during neurite extension through polarized membrane transport. Promotes axonal elongation and contributes to the establishment of neuronal cell polarity. Involved in nerve growth factor-induced neurite formation in VAPA-dependent manner. Contributes to both the formation and stabilization of the tubular ER network. Involved in ER morphogenesis by regulating the sheet-to-tubule balance and possibly the density of tubule interconnections. This chain is Protrudin (ZFYVE27), found in Gallus gallus (Chicken).